Reading from the N-terminus, the 62-residue chain is Protein translocase subunit SecE (62 aa).

A helical membrane pass occupies residues 40-60 (LLVLAVVGVLAYIIQLALTLI).

This sequence belongs to the SecE/SEC61-gamma family. In terms of assembly, component of the Sec protein translocase complex. Heterotrimer consisting of SecY (alpha), SecG (beta) and SecE (gamma) subunits. The heterotrimers can form oligomers, although 1 heterotrimer is thought to be able to translocate proteins. Interacts with the ribosome. May interact with SecDF, and other proteins may be involved.

It localises to the cell membrane. In terms of biological role, essential subunit of the Sec protein translocation channel SecYEG. Clamps together the 2 halves of SecY. May contact the channel plug during translocation. This Saccharolobus solfataricus (strain ATCC 35092 / DSM 1617 / JCM 11322 / P2) (Sulfolobus solfataricus) protein is Protein translocase subunit SecE.